Here is a 23-residue protein sequence, read N- to C-terminus: Basic phospholipase A2 intermexin (23 aa).

It belongs to the phospholipase A2 family. Group II subfamily. It depends on Ca(2+) as a cofactor. Contains 7 disulfide bonds. In terms of tissue distribution, expressed by the venom gland.

It is found in the secreted. The catalysed reaction is a 1,2-diacyl-sn-glycero-3-phosphocholine + H2O = a 1-acyl-sn-glycero-3-phosphocholine + a fatty acid + H(+). Functionally, snake venom phospholipase A2 (PLA2) that shows presynaptic neurotoxicity and low myotoxicity. PLA2 catalyzes the calcium-dependent hydrolysis of the 2-acyl groups in 3-sn-phosphoglycerides. The sequence is that of Basic phospholipase A2 intermexin from Gloydius intermedius (Central Asian pit viper).